Here is a 398-residue protein sequence, read N- to C-terminus: 8-amino-7-oxononanoate synthase (398 aa).

Arg26 is a substrate binding site. Pyridoxal 5'-phosphate is bound at residue 113–114 (GF). His138 contacts substrate. Pyridoxal 5'-phosphate-binding residues include Ser181, His209, and Thr238. Lys241 carries the post-translational modification N6-(pyridoxal phosphate)lysine. Thr355 serves as a coordination point for substrate.

Belongs to the class-II pyridoxal-phosphate-dependent aminotransferase family. BioF subfamily. As to quaternary structure, homodimer. Requires pyridoxal 5'-phosphate as cofactor.

It catalyses the reaction 6-carboxyhexanoyl-[ACP] + L-alanine + H(+) = (8S)-8-amino-7-oxononanoate + holo-[ACP] + CO2. The protein operates within cofactor biosynthesis; biotin biosynthesis. Catalyzes the decarboxylative condensation of pimeloyl-[acyl-carrier protein] and L-alanine to produce 8-amino-7-oxononanoate (AON), [acyl-carrier protein], and carbon dioxide. The chain is 8-amino-7-oxononanoate synthase from Aeromonas salmonicida (strain A449).